The sequence spans 42 residues: Photosystem II reaction center protein J (42 aa).

Residues 10-30 (IPLWLIGTVVGSLAIGLLAIF) traverse the membrane as a helical segment.

Belongs to the PsbJ family. In terms of assembly, PSII is composed of 1 copy each of membrane proteins PsbA, PsbB, PsbC, PsbD, PsbE, PsbF, PsbH, PsbI, PsbJ, PsbK, PsbL, PsbM, PsbT, PsbX, PsbY, PsbZ, Psb30/Ycf12, at least 3 peripheral proteins of the oxygen-evolving complex and a large number of cofactors. It forms dimeric complexes.

It is found in the plastid. Its subcellular location is the chloroplast thylakoid membrane. Its function is as follows. One of the components of the core complex of photosystem II (PSII). PSII is a light-driven water:plastoquinone oxidoreductase that uses light energy to abstract electrons from H(2)O, generating O(2) and a proton gradient subsequently used for ATP formation. It consists of a core antenna complex that captures photons, and an electron transfer chain that converts photonic excitation into a charge separation. The polypeptide is Photosystem II reaction center protein J (Stigeoclonium helveticum (Green alga)).